We begin with the raw amino-acid sequence, 1189 residues long: Magnesium-chelatase subunit H (1189 aa).

It belongs to the Mg-chelatase subunit H family.

The catalysed reaction is protoporphyrin IX + Mg(2+) + ATP + H2O = Mg-protoporphyrin IX + ADP + phosphate + 3 H(+). The protein operates within porphyrin-containing compound metabolism; bacteriochlorophyll biosynthesis (light-independent). In terms of biological role, involved in bacteriochlorophyll pigment biosynthesis; introduces a magnesium ion into protoporphyrin IX to yield Mg-protoroporphyrin IX. In Rhodobacter capsulatus (strain ATCC BAA-309 / NBRC 16581 / SB1003), this protein is Magnesium-chelatase subunit H (bchH).